Reading from the N-terminus, the 265-residue chain is Diphthine synthase (265 aa).

Residues leucine 10, aspartate 87, valine 90, 115-116, leucine 166, alanine 209, and histidine 234 contribute to the S-adenosyl-L-methionine site; that span reads SI.

Belongs to the diphthine synthase family. In terms of assembly, homodimer.

The catalysed reaction is 2-[(3S)-amino-3-carboxypropyl]-L-histidyl-[translation elongation factor 2] + 3 S-adenosyl-L-methionine = diphthine-[translation elongation factor 2] + 3 S-adenosyl-L-homocysteine + 3 H(+). It functions in the pathway protein modification; peptidyl-diphthamide biosynthesis. Functionally, S-adenosyl-L-methionine-dependent methyltransferase that catalyzes the trimethylation of the amino group of the modified target histidine residue in translation elongation factor 2 (EF-2), to form an intermediate called diphthine. The three successive methylation reactions represent the second step of diphthamide biosynthesis. This chain is Diphthine synthase, found in Pyrococcus horikoshii (strain ATCC 700860 / DSM 12428 / JCM 9974 / NBRC 100139 / OT-3).